Reading from the N-terminus, the 310-residue chain is Cytochrome f (310 aa).

The signal sequence occupies residues 1–27 (MRRLLSPLFAALIVGVTVLTAPSTSWA). Residues Tyr28, Cys48, Cys51, and His52 each coordinate heme. The chain crosses the membrane as a helical span at residues 277-297 (IYGLLAFFAAVALAQIMLVLK).

It belongs to the cytochrome f family. In terms of assembly, the 4 large subunits of the cytochrome b6-f complex are cytochrome b6, subunit IV (17 kDa polypeptide, PetD), cytochrome f and the Rieske protein, while the 4 small subunits are PetG, PetL, PetM and PetN. The complex functions as a dimer. It depends on heme as a cofactor.

Its subcellular location is the cellular thylakoid membrane. Component of the cytochrome b6-f complex, which mediates electron transfer between photosystem II (PSII) and photosystem I (PSI), cyclic electron flow around PSI, and state transitions. This is Cytochrome f from Synechococcus sp. (strain WH7803).